We begin with the raw amino-acid sequence, 287 residues long: ATP synthase gamma chain (287 aa).

Belongs to the ATPase gamma chain family. In terms of assembly, F-type ATPases have 2 components, CF(1) - the catalytic core - and CF(0) - the membrane proton channel. CF(1) has five subunits: alpha(3), beta(3), gamma(1), delta(1), epsilon(1). CF(0) has three main subunits: a, b and c.

It is found in the cell inner membrane. Functionally, produces ATP from ADP in the presence of a proton gradient across the membrane. The gamma chain is believed to be important in regulating ATPase activity and the flow of protons through the CF(0) complex. This is ATP synthase gamma chain from Klebsiella pneumoniae subsp. pneumoniae (strain ATCC 700721 / MGH 78578).